Here is a 428-residue protein sequence, read N- to C-terminus: Enolase (428 aa).

Glutamine 163 is a (2R)-2-phosphoglycerate binding site. The active-site Proton donor is the glutamate 205. 3 residues coordinate Mg(2+): aspartate 242, glutamate 286, and aspartate 313. Residues lysine 338, arginine 367, serine 368, and lysine 389 each contribute to the (2R)-2-phosphoglycerate site. Residue lysine 338 is the Proton acceptor of the active site.

This sequence belongs to the enolase family. Mg(2+) serves as cofactor.

The protein resides in the cytoplasm. It is found in the secreted. The protein localises to the cell surface. It catalyses the reaction (2R)-2-phosphoglycerate = phosphoenolpyruvate + H2O. It participates in carbohydrate degradation; glycolysis; pyruvate from D-glyceraldehyde 3-phosphate: step 4/5. Catalyzes the reversible conversion of 2-phosphoglycerate (2-PG) into phosphoenolpyruvate (PEP). It is essential for the degradation of carbohydrates via glycolysis. In Syntrophus aciditrophicus (strain SB), this protein is Enolase.